Consider the following 135-residue polypeptide: Interleukin-4 (135 aa).

A signal peptide spans 1–24; it reads MGLTSQLIPVLVCLLACTSHFVHG. 3 cysteine pairs are disulfide-bonded: cysteine 27/cysteine 135, cysteine 48/cysteine 85, and cysteine 70/cysteine 105. Asparagine 62 and asparagine 96 each carry an N-linked (GlcNAc...) asparagine glycan.

This sequence belongs to the IL-4/IL-13 family.

It localises to the secreted. In terms of biological role, participates in at least several B-cell activation processes as well as of other cell types. It is a costimulator of DNA-synthesis. It induces the expression of class II MHC molecules on resting B-cells. It enhances both secretion and cell surface expression of IgE and IgG1. It also regulates the expression of the low affinity Fc receptor for IgE (CD23) on both lymphocytes and monocytes. Positively regulates IL31RA expression in macrophages. Stimulates autophagy in dendritic cells by interfering with mTORC1 signaling and through the induction of RUFY4. The protein is Interleukin-4 (IL4) of Cervus elaphus (Red deer).